A 295-amino-acid chain; its full sequence is Pyridoxal 5'-phosphate synthase subunit PdxS (295 aa).

Position 25 (Asp-25) interacts with D-ribose 5-phosphate. The Schiff-base intermediate with D-ribose 5-phosphate role is filled by Lys-82. Gly-154 is a binding site for D-ribose 5-phosphate. Arg-166 is a D-glyceraldehyde 3-phosphate binding site. Residues Gly-215 and 236–237 each bind D-ribose 5-phosphate; that span reads GS.

This sequence belongs to the PdxS/SNZ family. In the presence of PdxT, forms a dodecamer of heterodimers.

The enzyme catalyses aldehydo-D-ribose 5-phosphate + D-glyceraldehyde 3-phosphate + L-glutamine = pyridoxal 5'-phosphate + L-glutamate + phosphate + 3 H2O + H(+). It participates in cofactor biosynthesis; pyridoxal 5'-phosphate biosynthesis. Its function is as follows. Catalyzes the formation of pyridoxal 5'-phosphate from ribose 5-phosphate (RBP), glyceraldehyde 3-phosphate (G3P) and ammonia. The ammonia is provided by the PdxT subunit. Can also use ribulose 5-phosphate and dihydroxyacetone phosphate as substrates, resulting from enzyme-catalyzed isomerization of RBP and G3P, respectively. In Staphylococcus carnosus (strain TM300), this protein is Pyridoxal 5'-phosphate synthase subunit PdxS.